We begin with the raw amino-acid sequence, 363 residues long: Histidinol-phosphate aminotransferase (363 aa).

An N6-(pyridoxal phosphate)lysine modification is found at Lys-218.

Belongs to the class-II pyridoxal-phosphate-dependent aminotransferase family. Histidinol-phosphate aminotransferase subfamily. As to quaternary structure, homodimer. The cofactor is pyridoxal 5'-phosphate.

The enzyme catalyses L-histidinol phosphate + 2-oxoglutarate = 3-(imidazol-4-yl)-2-oxopropyl phosphate + L-glutamate. Its pathway is amino-acid biosynthesis; L-histidine biosynthesis; L-histidine from 5-phospho-alpha-D-ribose 1-diphosphate: step 7/9. The polypeptide is Histidinol-phosphate aminotransferase (Xanthomonas axonopodis pv. citri (strain 306)).